Reading from the N-terminus, the 245-residue chain is Chromosome partition protein MukE (245 aa).

The tract at residues 213 to 245 (PESIAAEKATADDESAVSNEEDFEYDDNQEGAE) is disordered. A compositionally biased stretch (acidic residues) spans 224-245 (DDESAVSNEEDFEYDDNQEGAE).

Belongs to the MukE family. Interacts, and probably forms a ternary complex, with MukF and MukB. The complex formation is stimulated by calcium or magnesium.

It is found in the cytoplasm. It localises to the nucleoid. Functionally, involved in chromosome condensation, segregation and cell cycle progression. May participate in facilitating chromosome segregation by condensation DNA from both sides of a centrally located replisome during cell division. Probably acts via its interaction with MukB and MukF. This Actinobacillus succinogenes (strain ATCC 55618 / DSM 22257 / CCUG 43843 / 130Z) protein is Chromosome partition protein MukE.